A 160-amino-acid chain; its full sequence is SsrA-binding protein (160 aa).

The disordered stretch occupies residues 136-160 (KRDTVRERDSNRELQRAVRNKGKED).

The protein belongs to the SmpB family.

It localises to the cytoplasm. Functionally, required for rescue of stalled ribosomes mediated by trans-translation. Binds to transfer-messenger RNA (tmRNA), required for stable association of tmRNA with ribosomes. tmRNA and SmpB together mimic tRNA shape, replacing the anticodon stem-loop with SmpB. tmRNA is encoded by the ssrA gene; the 2 termini fold to resemble tRNA(Ala) and it encodes a 'tag peptide', a short internal open reading frame. During trans-translation Ala-aminoacylated tmRNA acts like a tRNA, entering the A-site of stalled ribosomes, displacing the stalled mRNA. The ribosome then switches to translate the ORF on the tmRNA; the nascent peptide is terminated with the 'tag peptide' encoded by the tmRNA and targeted for degradation. The ribosome is freed to recommence translation, which seems to be the essential function of trans-translation. In Pseudomonas putida (strain W619), this protein is SsrA-binding protein.